A 71-amino-acid chain; its full sequence is Large ribosomal subunit protein uL29 (71 aa).

This sequence belongs to the universal ribosomal protein uL29 family.

This Methanococcus maripaludis (strain C7 / ATCC BAA-1331) protein is Large ribosomal subunit protein uL29.